The primary structure comprises 198 residues: Guanylyl cyclase-activating protein 2 (198 aa).

G2 is lipidated: N-myristoyl glycine. EF-hand domains follow at residues 16 to 51 (DVAELQEWYKKFVVECPSGTLFMHEFKRFFGVQDNH), 52 to 87 (EAAEYIENMFRAFDKNGDNTIDFLEYVAALNLVLRG), 88 to 123 (KLEHKLRWTFKVYDKDGNGCIDKPELLEIVESIYKL), and 139 to 174 (TPEEVVDRIFQLVDENGDGQLSLDEFIDGARKDKWV). Ca(2+) contacts are provided by D65, N67, D69, T71, E76, D101, D103, N105, C107, E112, D152, N154, D156, Q158, and E163.

In terms of assembly, undergoes dimerization at low calcium ions concentration, while the presence of calcium ions inhibits its dimerization. Dimerization correlates with its ability to activate GC. Retina and pineal gland.

Stimulates synthesis of cGMP in photoreceptors. Thought to mediate Ca(2+)-sensitive regulation of retinal guanylyl cyclase (GC), a key event in recovery of the dark state of rod photoreceptors following light exposure. In Gallus gallus (Chicken), this protein is Guanylyl cyclase-activating protein 2 (GUCA1B).